Here is a 147-residue protein sequence, read N- to C-terminus: 3-hydroxyacyl-[acyl-carrier-protein] dehydratase FabZ (147 aa).

H46 is a catalytic residue.

Belongs to the thioester dehydratase family. FabZ subfamily.

The protein localises to the cytoplasm. It catalyses the reaction a (3R)-hydroxyacyl-[ACP] = a (2E)-enoyl-[ACP] + H2O. Involved in unsaturated fatty acids biosynthesis. Catalyzes the dehydration of short chain beta-hydroxyacyl-ACPs and long chain saturated and unsaturated beta-hydroxyacyl-ACPs. This chain is 3-hydroxyacyl-[acyl-carrier-protein] dehydratase FabZ, found in Syntrophobacter fumaroxidans (strain DSM 10017 / MPOB).